The chain runs to 609 residues: UvrABC system protein C (609 aa).

In terms of domain architecture, GIY-YIG spans 15–92 (TGSGVYQMQD…IKQFRPRYNV (78 aa)). In terms of domain architecture, UVR spans 202-237 (DQVIIKLTERMEVASENLVFEEAAHYRDQIRQLRRL).

It belongs to the UvrC family. Interacts with UvrB in an incision complex.

It localises to the cytoplasm. The UvrABC repair system catalyzes the recognition and processing of DNA lesions. UvrC both incises the 5' and 3' sides of the lesion. The N-terminal half is responsible for the 3' incision and the C-terminal half is responsible for the 5' incision. This chain is UvrABC system protein C, found in Coxiella burnetii (strain CbuK_Q154) (Coxiella burnetii (strain Q154)).